Reading from the N-terminus, the 331-residue chain is MPESQDIISQSIPSLTQFLGEEQARFPNIPTAIPIIIQAMATSARFISKAVVQSMIDKDVSFTESLNCSGDTQQKLDIVAQSFFLEALEATHEVCAVISEEADSVVPLRNKNARYIVALDPLDGSSNINVNSPIGTLFSIYQRISPSETPIQDADVLIPGKQQLAAGYMLYSTVNTLVYATIYGVHGFTYDPTVNQFFLTHPALRMPENGITYAINHSYLHTFPHYIQNYIAYCRRQELTSRYTGALVADFHRHLLEGGIYLYPPTYKRPKGKLRLMFECNVLAFIAEQAGGLATDGKQPILNIIPRHIHQCVPFYIGSKTMVKNLLNCVG.

The Mg(2+) site is built by glutamate 100, aspartate 120, leucine 122, and aspartate 123. Residues 123–126 (DGSS), asparagine 216, tyrosine 243, 261–263 (YLY), and lysine 273 contribute to the substrate site. Glutamate 279 lines the Mg(2+) pocket.

This sequence belongs to the FBPase class 1 family. As to quaternary structure, homotetramer. It depends on Mg(2+) as a cofactor.

It localises to the cytoplasm. It catalyses the reaction beta-D-fructose 1,6-bisphosphate + H2O = beta-D-fructose 6-phosphate + phosphate. It participates in carbohydrate biosynthesis; gluconeogenesis. The sequence is that of Fructose-1,6-bisphosphatase class 1 from Amoebophilus asiaticus (strain 5a2).